The following is an 811-amino-acid chain: Transmembrane protease serine 6 (811 aa).

Topologically, residues Met1–Pro55 are cytoplasmic. Residues Leu56–Leu76 traverse the membrane as a helical; Signal-anchor for type II membrane protein segment. The Extracellular portion of the chain corresponds to Gly77–Thr811. Positions Val84–Val209 constitute an SEA domain. Residues Asn136, Asn184, Asn216, Asn338, Asn433, and Asn453 are each glycosylated (N-linked (GlcNAc...) asparagine). CUB domains are found at residues Ala213–Glu336 and Cys335–Tyr452. A disulfide bridge connects residues Cys335 and Cys366. 3 consecutive LDL-receptor class A domains span residues Pro457–Cys489, Val490–Gln526, and Pro530–Asp567. Intrachain disulfides connect Cys458-Cys470, Cys464-Cys480, Cys474-Cys489, Cys491-Cys503, Cys497-Cys516, Cys510-Cys525, Cys531-Cys543, Cys538-Cys557, Cys551-Cys566, and Cys602-Cys618. An N-linked (GlcNAc...) asparagine glycan is attached at Asn518. A Peptidase S1 domain is found at Ile577 to Thr811. Active-site charge relay system residues include His617 and Asp668. Disulfide bonds link Cys702/Cys768, Cys733/Cys747, and Cys758/Cys787. Catalysis depends on Ser762, which acts as the Charge relay system.

The protein belongs to the peptidase S1 family. As to quaternary structure, interacts with HJV. Post-translationally, the single-chain zymogen undergoes autoproteolytic processing. This results in TMPRSS6 shedding from the cell surface and conversion into an activated two-chains form which is released extracellularly. The process involves a trans-activation mechanism that requires TMPRSS6 oligomerization.

It localises to the cell membrane. Membrane-bound serine protease. Through the cleavage of cell surface hemojuvelin (HJV), a regulator of the expression of the iron absorption-regulating hormone hepicidin/HAMP, plays a role in iron homeostasis. In Homo sapiens (Human), this protein is Transmembrane protease serine 6 (TMPRSS6).